Here is a 524-residue protein sequence, read N- to C-terminus: Ribonuclease Y (524 aa).

The helical transmembrane segment at 3 to 23 threads the bilayer; it reads IVINLFLIIFASVVFFAAGFF. The KH domain maps to 214–274; the sequence is ALSVVHIQSD…LRREHAKLTL (61 aa). One can recognise an HD domain in the interval 340-432; the sequence is LLQHSREVAM…VDAANVISLA (93 aa).

This sequence belongs to the RNase Y family.

The protein localises to the cell membrane. Functionally, endoribonuclease that initiates mRNA decay. The sequence is that of Ribonuclease Y from Chlorobium luteolum (strain DSM 273 / BCRC 81028 / 2530) (Pelodictyon luteolum).